Consider the following 185-residue polypeptide: Transmembrane protein 140 (185 aa).

Over 1–11 the chain is Cytoplasmic; that stretch reads MAGPRPRWRDQ. Residues 12–32 traverse the membrane as a helical segment; the sequence is LLFMSIIVLVIVVICLMFYAL. The Extracellular segment spans residues 33 to 77; the sequence is LWEAGNLTDLPNLRIGFYNFCLWNEDTSTLQCHQFPELEALGVPR. The N-linked (GlcNAc...) asparagine glycan is linked to Asn-38. Residues 78–98 traverse the membrane as a helical segment; that stretch reads VGLGLARLGVYGSLVLTLFAP. Topologically, residues 99 to 114 are cytoplasmic; it reads QPLLLAQCNSDERAWR. A helical membrane pass occupies residues 115–135; the sequence is LAVGFLAVSSVLLAGGLGLFL. Over 136-150 the chain is Extracellular; it reads SYVWKWVRLSLPGPG. The helical transmembrane segment at 151-171 threads the bilayer; the sequence is FLALGSAQALLILLLIAMAVF. Residues 172–185 lie on the Cytoplasmic side of the membrane; it reads PLRAERAESKLESC.

In terms of tissue distribution, expression significantly higher in gliomas than in normal brain tissues.

Its subcellular location is the membrane. The polypeptide is Transmembrane protein 140 (TMEM140) (Homo sapiens (Human)).